We begin with the raw amino-acid sequence, 239 residues long: 1-(5-phosphoribosyl)-5-[(5-phosphoribosylamino)methylideneamino] imidazole-4-carboxamide isomerase (239 aa).

Catalysis depends on aspartate 9, which acts as the Proton acceptor. Catalysis depends on aspartate 131, which acts as the Proton donor.

It belongs to the HisA/HisF family.

Its subcellular location is the cytoplasm. It catalyses the reaction 1-(5-phospho-beta-D-ribosyl)-5-[(5-phospho-beta-D-ribosylamino)methylideneamino]imidazole-4-carboxamide = 5-[(5-phospho-1-deoxy-D-ribulos-1-ylimino)methylamino]-1-(5-phospho-beta-D-ribosyl)imidazole-4-carboxamide. Its pathway is amino-acid biosynthesis; L-histidine biosynthesis; L-histidine from 5-phospho-alpha-D-ribose 1-diphosphate: step 4/9. The polypeptide is 1-(5-phosphoribosyl)-5-[(5-phosphoribosylamino)methylideneamino] imidazole-4-carboxamide isomerase (Parabacteroides distasonis (strain ATCC 8503 / DSM 20701 / CIP 104284 / JCM 5825 / NCTC 11152)).